Reading from the N-terminus, the 119-residue chain is Dolichyl-diphosphooligosaccharide--protein glycosyltransferase subunit DAD1 (119 aa).

Ser2 is modified (N-acetylserine). Residues 2-30 are Cytoplasmic-facing; that stretch reads SASVASVISRFLEEYLSSTPQRLKLLDAY. A helical membrane pass occupies residues 31 to 51; sequence LLYILLTGALQFGYCLLVGTF. The Lumenal portion of the chain corresponds to 52–54; that stretch reads PFN. Residues 55-75 form a helical membrane-spanning segment; it reads SFLSGFISCVGSFILAGNGSL. Residues 76-81 lie on the Cytoplasmic side of the membrane; it reads RNRSNN. The chain crosses the membrane as a helical span at residues 82 to 98; the sequence is VFTLVRCFSSLVTLFYS. The Lumenal portion of the chain corresponds to 99–119; that stretch reads RSPPREVPRGACIALFCERGN.

Belongs to the DAD/OST2 family. In terms of assembly, component of the oligosaccharyltransferase (OST) complex. OST exists in two different complex forms which contain common core subunits RPN1, RPN2, OST48, OST4, DAD1 and TMEM258, either STT3A or STT3B as catalytic subunits, and form-specific accessory subunits. STT3A complex assembly occurs through the formation of 3 subcomplexes. Subcomplex 1 contains RPN1 and TMEM258, subcomplex 2 contains the STT3A-specific subunits STT3A, DC2/OSTC, and KCP2 as well as the core subunit OST4, and subcomplex 3 contains RPN2, DAD1, and OST48. The STT3A complex can form stable complexes with the Sec61 complex or with both the Sec61 and TRAP complexes.

It is found in the endoplasmic reticulum membrane. The protein operates within protein modification; protein glycosylation. Its function is as follows. Subunit of the oligosaccharyl transferase (OST) complex that catalyzes the initial transfer of a defined glycan (Glc(3)Man(9)GlcNAc(2) in eukaryotes) from the lipid carrier dolichol-pyrophosphate to an asparagine residue within an Asn-X-Ser/Thr consensus motif in nascent polypeptide chains, the first step in protein N-glycosylation. N-glycosylation occurs cotranslationally and the complex associates with the Sec61 complex at the channel-forming translocon complex that mediates protein translocation across the endoplasmic reticulum (ER). All subunits are required for a maximal enzyme activity. The chain is Dolichyl-diphosphooligosaccharide--protein glycosyltransferase subunit DAD1 from Canis lupus familiaris (Dog).